Consider the following 65-residue polypeptide: Ferredoxin-1 (65 aa).

Residues 2-30 (AMKIDPELCTSCGDCEPVCPTNAIAPKKG) enclose the 4Fe-4S ferredoxin-type domain. [4Fe-4S] cluster contacts are provided by cysteine 10, cysteine 13, cysteine 16, cysteine 20, cysteine 39, cysteine 42, cysteine 51, and cysteine 55.

It depends on [4Fe-4S] cluster as a cofactor.

Functionally, ferredoxins are iron-sulfur proteins that transfer electrons in a wide variety of metabolic reactions. This ferredoxin probably participates in nitrogen fixation. This Rhodobacter capsulatus (Rhodopseudomonas capsulata) protein is Ferredoxin-1 (fdxN).